We begin with the raw amino-acid sequence, 235 residues long: Putative N-acetylmannosamine-6-phosphate 2-epimerase (235 aa).

Belongs to the NanE family.

It catalyses the reaction an N-acyl-D-glucosamine 6-phosphate = an N-acyl-D-mannosamine 6-phosphate. Its pathway is amino-sugar metabolism; N-acetylneuraminate degradation; D-fructose 6-phosphate from N-acetylneuraminate: step 3/5. Converts N-acetylmannosamine-6-phosphate (ManNAc-6-P) to N-acetylglucosamine-6-phosphate (GlcNAc-6-P). This is Putative N-acetylmannosamine-6-phosphate 2-epimerase from Photobacterium profundum (strain SS9).